Reading from the N-terminus, the 475-residue chain is MESTTEVELSRLPDSLRGRILVTGAGVSGTGIAGMLHDLGLDVVVAEDNETSRHRLIELLDVDVVGTEHARASLGDYSIVVTSPGWRPDSPVLVDAASRGLEVIGDVELAWRLDRAGVFGVSRTWLAVTGTNGKTTTTAMLAAMMKQGGFNAVAVGNIGVPVSAALTSCDRVDVMVAELSSFQLHWAPTLVPDAGLVLNLAEDHIDWHGSFRDYALAKTRVLTAPVAVIGADDSYLVELTTELGLSGLIGFTLGEPGPRQLGVLNGHLVDNAFAAQLPLAPADGINPSGPAGVLDALAAAAVARSQGVSAEDIAGALATFEVSGHRGQVVAEDHGVQFIDNSKATNPHAADTALAGRESVIWIVGGQLKGADISELVATHAHRIKAALVLGADRAEIVTAVEQHAPDAMIRVTDSTDPVAAMRELVDHAFRFAEPGDCVLLAPAAASLDMYKGMGQRGDIFAEAVLSTIEGQKEK.

Position 130–136 (130–136 (GTNGKTT)) interacts with ATP.

It belongs to the MurCDEF family.

Its subcellular location is the cytoplasm. The catalysed reaction is UDP-N-acetyl-alpha-D-muramoyl-L-alanine + D-glutamate + ATP = UDP-N-acetyl-alpha-D-muramoyl-L-alanyl-D-glutamate + ADP + phosphate + H(+). The protein operates within cell wall biogenesis; peptidoglycan biosynthesis. Functionally, cell wall formation. Catalyzes the addition of glutamate to the nucleotide precursor UDP-N-acetylmuramoyl-L-alanine (UMA). This chain is UDP-N-acetylmuramoylalanine--D-glutamate ligase, found in Corynebacterium efficiens (strain DSM 44549 / YS-314 / AJ 12310 / JCM 11189 / NBRC 100395).